The chain runs to 138 residues: Abscisic stress-ripening protein 5 (138 aa).

Residues 1–13 are compositionally biased toward basic residues; sequence MAEEKHHHHLFHH. Disordered regions lie at residues 1–27 and 106–138; these read MAEE…DSYG and GAGG…HLFG.

The protein belongs to the abscisic acid and water stress-induced protein family.

It is found in the nucleus. The protein resides in the cytoplasm. Its function is as follows. Involved in tolerance to aluminum. Regulates the expression of different genes that collectively contribute to the protection of the cell in response to aluminum stress. The protein is Abscisic stress-ripening protein 5 of Oryza sativa subsp. indica (Rice).